A 400-amino-acid chain; its full sequence is Argininosuccinate synthase (400 aa).

9 to 17 (AYSGGLDTS) contacts ATP. Residue Tyr-87 participates in L-citrulline binding. Gly-117 contributes to the ATP binding site. L-aspartate contacts are provided by Thr-119, Asn-123, and Asp-124. L-citrulline is bound at residue Asn-123. L-citrulline contacts are provided by Arg-127, Ser-176, Ser-185, Glu-261, and Tyr-273.

Belongs to the argininosuccinate synthase family. Type 1 subfamily. In terms of assembly, homotetramer.

It localises to the cytoplasm. It carries out the reaction L-citrulline + L-aspartate + ATP = 2-(N(omega)-L-arginino)succinate + AMP + diphosphate + H(+). The protein operates within amino-acid biosynthesis; L-arginine biosynthesis; L-arginine from L-ornithine and carbamoyl phosphate: step 2/3. This chain is Argininosuccinate synthase, found in Chlorobium phaeobacteroides (strain DSM 266 / SMG 266 / 2430).